The following is a 240-amino-acid chain: Acetoacetyl-CoA reductase (240 aa).

NADP(+) contacts are provided by residues 18–20 (RGI) and 82–86 (NAGIT). Substrate contacts are provided by residues Ser134 and 141-144 (NVGQ). The active-site Proton acceptor is Tyr147. An NADP(+)-binding site is contributed by 177-180 (PGFI). Residue 178-179 (GF) coordinates substrate.

It belongs to the short-chain dehydrogenases/reductases (SDR) family.

It carries out the reaction a (3R)-3-hydroxyacyl-CoA + NADP(+) = a 3-oxoacyl-CoA + NADPH + H(+). Its pathway is biopolymer metabolism; poly-(R)-3-hydroxybutanoate biosynthesis. In terms of biological role, catalyzes the reduction of acetoacetyl-CoA to (R)-3-hydroxybutyryl-CoA. When expressed in E.coli with Synechocystis PhaA, PhaC and PhaE confers the ability to synthesize up to 12% (w/w) poly(3-hydroxybutyrate) (PHB) depending on the carbon source. In Synechocystis sp. (strain ATCC 27184 / PCC 6803 / Kazusa), this protein is Acetoacetyl-CoA reductase.